A 398-amino-acid polypeptide reads, in one-letter code: Succinate--CoA ligase [ADP-forming] subunit beta (398 aa).

An ATP-grasp domain is found at 9-254 (KALLKSYGAP…TTEEDDKEIE (246 aa)). Residues K46, 53-55 (GRG), E109, A112, and E117 each bind ATP. N209 and D223 together coordinate Mg(2+). Substrate is bound by residues N274 and 331–333 (GIM).

This sequence belongs to the succinate/malate CoA ligase beta subunit family. In terms of assembly, heterotetramer of two alpha and two beta subunits. The cofactor is Mg(2+).

It catalyses the reaction succinate + ATP + CoA = succinyl-CoA + ADP + phosphate. The enzyme catalyses GTP + succinate + CoA = succinyl-CoA + GDP + phosphate. The protein operates within carbohydrate metabolism; tricarboxylic acid cycle; succinate from succinyl-CoA (ligase route): step 1/1. Its function is as follows. Succinyl-CoA synthetase functions in the citric acid cycle (TCA), coupling the hydrolysis of succinyl-CoA to the synthesis of either ATP or GTP and thus represents the only step of substrate-level phosphorylation in the TCA. The beta subunit provides nucleotide specificity of the enzyme and binds the substrate succinate, while the binding sites for coenzyme A and phosphate are found in the alpha subunit. The protein is Succinate--CoA ligase [ADP-forming] subunit beta of Rhizobium meliloti (strain 1021) (Ensifer meliloti).